A 185-amino-acid polypeptide reads, in one-letter code: Putative manganese efflux pump MntP (185 aa).

A run of 6 helical transmembrane segments spans residues L4 to I24, A36 to I56, I65 to I85, V105 to V125, V130 to F150, and I165 to L185.

The protein belongs to the MntP (TC 9.B.29) family.

Its subcellular location is the cell membrane. Its function is as follows. Probably functions as a manganese efflux pump. This is Putative manganese efflux pump MntP from Methanoregula boonei (strain DSM 21154 / JCM 14090 / 6A8).